We begin with the raw amino-acid sequence, 317 residues long: TPR repeat-containing thioredoxin TDX (317 aa).

A disordered region spans residues 1–48 (MATAGASSFEDEIMESDIELEGEAVEPDNDPPQKMGDPSVEVSDEKRD). Residues 9 to 29 (FEDEIMESDIELEGEAVEPDN) are compositionally biased toward acidic residues. TPR repeat units lie at residues 50–83 (AQLC…NPTS), 85–117 (IAYA…NPDS), and 119–151 (KGYK…DYDE). The Thioredoxin domain maps to 189 to 316 (EKQRKHAEEV…LERKVAQHGS (128 aa)). Residues cysteine 242 and cysteine 245 each act as nucleophile in the active site. A disulfide bridge connects residues cysteine 242 and cysteine 245.

This sequence belongs to the thioredoxin family.

Its function is as follows. Probable thiol-disulfide oxidoreductase that may participate in various redox reactions and act as chaperone under heat shock. May interact with HSP70 proteins through the TPR repeats. The sequence is that of TPR repeat-containing thioredoxin TDX from Oryza sativa subsp. japonica (Rice).